Here is a 307-residue protein sequence, read N- to C-terminus: Phosphonates import ATP-binding protein PhnC (307 aa).

The ABC transporter domain maps to 4 to 252 (IRIERLSKTF…RLHALYGDDA (249 aa)). Residue 37-44 (GASGSGKS) participates in ATP binding. Over residues 265-275 (AAREAAGEPAR) the composition is skewed to basic and acidic residues. The interval 265-307 (AAREAAGEPARRAPAAFDSAGSPDLPDSQPASPRRMLAASSMR) is disordered.

The protein belongs to the ABC transporter superfamily. Phosphonates importer (TC 3.A.1.9.1) family. The complex is composed of two ATP-binding proteins (PhnC), two transmembrane proteins (PhnE) and a solute-binding protein (PhnD).

The protein resides in the cell inner membrane. It carries out the reaction phosphonate(out) + ATP + H2O = phosphonate(in) + ADP + phosphate + H(+). Part of the ABC transporter complex PhnCDE involved in phosphonates import. Responsible for energy coupling to the transport system. This chain is Phosphonates import ATP-binding protein PhnC, found in Burkholderia pseudomallei (strain 1710b).